The chain runs to 77 residues: UPF0346 protein lin1971 (77 aa).

This sequence belongs to the UPF0346 family.

The protein is UPF0346 protein lin1971 of Listeria innocua serovar 6a (strain ATCC BAA-680 / CLIP 11262).